The sequence spans 144 residues: Putative pre-16S rRNA nuclease (144 aa).

This sequence belongs to the YqgF nuclease family.

The protein localises to the cytoplasm. Its function is as follows. Could be a nuclease involved in processing of the 5'-end of pre-16S rRNA. The chain is Putative pre-16S rRNA nuclease from Chlorobium phaeobacteroides (strain BS1).